The following is a 310-amino-acid chain: Flavin-dependent trigonelline monooxygenase, reductase component (310 aa).

FMN contacts are provided by residues 40–43, 57–63, 90–91, and R97; these read TANS, SIAKTSS, and FA.

Belongs to the non-flavoprotein flavin reductase family. In terms of assembly, homodimer. The trigonelline monooxygenase is composed of a reductase component TgnA and an oxygenase component TgnB.

The catalysed reaction is a reduced flavin + NAD(+) = an oxidized flavin + NADH + 2 H(+). The enzyme catalyses FADH2 + NAD(+) = FAD + NADH + 2 H(+). It carries out the reaction FMNH2 + NAD(+) = FMN + NADH + 2 H(+). With respect to regulation, maximal reductase activity is achieved only upon trigonelline (TG) binding to the reductase component before interaction with NADH. It seems that TgnA undergoes an allosteric transition upon trigonelline (TG) binding accounting for the positive cooperativity toward NADH oxidation. Its function is as follows. Involved in the degradation of the pyridine ring of trigonelline (TG; N-methylnicotinate) into succinate and methylamine as carbon and nitrogen sources, respectively. TgnA catalyzes the reduction of flavin (FMN or FAD) by NADH and supplies the reduced flavin to the oxygenase component TgnB. This chain is Flavin-dependent trigonelline monooxygenase, reductase component, found in Acinetobacter baylyi (strain ATCC 33305 / BD413 / ADP1).